Consider the following 349-residue polypeptide: MKAQYFFWILFLIGFYWMLYLYQDFLMDALIAGLLCVGLFQVKVFLNKRFSNVISSFLCVLVLASVVIVPLYFIVYKGSNVIFEINFEKLSALIKWLKGTITENLSHFPAIHDGVSKFLENFSAASITGYLLKVSSYIGKYSLKLVTDALFILGLLFFFFYYGEKFYRYFLGVLPLEMNQSKKIFEEVAGILRIVLLTSLITVILEGVAFGTMIIWFGHDGWSLGILYGLASLVPAVGGALIWIPIAIYELYHGHVNEAIFIVLYSILLIGVLIDSVIKPILIVFIKKRIFKTTLKINEILIFFSMIAGISQFGFWGIIVGPTITAFFIALLRLYENYFIQKEQKTCEC.

The next 8 helical transmembrane spans lie at 6 to 26 (FFWI…QDFL), 27 to 47 (MDAL…VFLN), 56 to 76 (SFLC…FIVY), 143 to 163 (LKLV…FYYG), 195 to 215 (VLLT…TMII), 224 to 244 (LGIL…LIWI), 258 to 278 (EAIF…DSVI), and 300 to 320 (ILIF…GIIV).

This sequence belongs to the autoinducer-2 exporter (AI-2E) (TC 2.A.86) family.

Its subcellular location is the cell membrane. The polypeptide is Putative transport protein jhp_0514 (Helicobacter pylori (strain J99 / ATCC 700824) (Campylobacter pylori J99)).